We begin with the raw amino-acid sequence, 378 residues long: 3-dehydroquinate synthase (378 aa).

NAD(+) contacts are provided by residues 115-119, 139-140, Lys-152, and Lys-161; these read GVVGD and TS. Residues Glu-194, His-256, and His-275 each coordinate Zn(2+).

This sequence belongs to the sugar phosphate cyclases superfamily. Dehydroquinate synthase family. Co(2+) serves as cofactor. Requires Zn(2+) as cofactor. It depends on NAD(+) as a cofactor.

The protein localises to the cytoplasm. The enzyme catalyses 7-phospho-2-dehydro-3-deoxy-D-arabino-heptonate = 3-dehydroquinate + phosphate. The protein operates within metabolic intermediate biosynthesis; chorismate biosynthesis; chorismate from D-erythrose 4-phosphate and phosphoenolpyruvate: step 2/7. In terms of biological role, catalyzes the conversion of 3-deoxy-D-arabino-heptulosonate 7-phosphate (DAHP) to dehydroquinate (DHQ). This Brucella anthropi (strain ATCC 49188 / DSM 6882 / CCUG 24695 / JCM 21032 / LMG 3331 / NBRC 15819 / NCTC 12168 / Alc 37) (Ochrobactrum anthropi) protein is 3-dehydroquinate synthase.